Consider the following 270-residue polypeptide: Oxidized low-density lipoprotein receptor 1 (270 aa).

Over residues 1 to 14 the composition is skewed to basic and acidic residues; it reads MTVDDPKGMKDQLD. The segment at 1–22 is disordered; the sequence is MTVDDPKGMKDQLDQKPNGKTA. The Cytoplasmic portion of the chain corresponds to 1-33; the sequence is MTVDDPKGMKDQLDQKPNGKTAKGFVSSWRWYP. A helical; Signal-anchor for type II membrane protein membrane pass occupies residues 34-56; that stretch reads AAVTLGVLCLGLLVTVILLILQL. Cys42 carries the S-palmitoyl cysteine lipid modification. The segment at 57–146 is neck; the sequence is SQVSDLIKKQ…SGPCPQDWLW (90 aa). Over 57 to 270 the chain is Extracellular; it reads SQVSDLIKKQ…QKKANLLRAQ (214 aa). N-linked (GlcNAc...) asparagine glycosylation is found at Asn69 and Asn135. Residues 85–135 are a coiled coil; that stretch reads RRSEKSAQESQKELKEMIETLAHKLDEKSKKLMELHRQNLNLQEVLKEAAN. Cystine bridges form between Cys140/Cys151, Cys168/Cys260, and Cys239/Cys252. The 115-residue stretch at 147 to 261 folds into the C-type lectin domain; it reads HEENCYQFSS…CILTAFSICQ (115 aa).

As to quaternary structure, homodimer; disulfide-linked. May form a hexamer composed of 3 homodimers. Interacts with HSP70. Post-translationally, N-glycosylated. Highly expressed in endothelial cells, aortic intima and lung. Expressed at low level in other tissues.

The protein resides in the cell membrane. The protein localises to the membrane raft. Its subcellular location is the secreted. Receptor that mediates the recognition, internalization and degradation of oxidatively modified low density lipoprotein (oxLDL) by vascular endothelial cells. OxLDL is a marker of atherosclerosis that induces vascular endothelial cell activation and dysfunction, resulting in pro-inflammatory responses, pro-oxidative conditions and apoptosis. Its association with oxLDL induces the activation of NF-kappa-B through an increased production of intracellular reactive oxygen and a variety of pro-atherogenic cellular responses including a reduction of nitric oxide (NO) release, monocyte adhesion and apoptosis. In addition to binding oxLDL, it acts as a receptor for the HSP70 protein involved in antigen cross-presentation to naive T-cells in dendritic cells, thereby participating in cell-mediated antigen cross-presentation. Also involved in inflammatory process, by acting as a leukocyte-adhesion molecule at the vascular interface in endotoxin-induced inflammation. Also acts as a receptor for advanced glycation end (AGE) products, activated platelets, monocytes, apoptotic cells and both Gram-negative and Gram-positive bacteria. This Bos taurus (Bovine) protein is Oxidized low-density lipoprotein receptor 1 (OLR1).